The primary structure comprises 102 residues: NADH-quinone oxidoreductase subunit K 2 (102 aa).

3 consecutive transmembrane segments (helical) span residues 5–25, 30–50, and 65–85; these read FEHV…CVLV, LIML…AFVG, and LIIM…VVYL.

The protein belongs to the complex I subunit 4L family. As to quaternary structure, NDH-1 is composed of 14 different subunits. Subunits NuoA, H, J, K, L, M, N constitute the membrane sector of the complex.

Its subcellular location is the cell inner membrane. It carries out the reaction a quinone + NADH + 5 H(+)(in) = a quinol + NAD(+) + 4 H(+)(out). Functionally, NDH-1 shuttles electrons from NADH, via FMN and iron-sulfur (Fe-S) centers, to quinones in the respiratory chain. The immediate electron acceptor for the enzyme in this species is believed to be ubiquinone. Couples the redox reaction to proton translocation (for every two electrons transferred, four hydrogen ions are translocated across the cytoplasmic membrane), and thus conserves the redox energy in a proton gradient. The chain is NADH-quinone oxidoreductase subunit K 2 from Geobacter sulfurreducens (strain ATCC 51573 / DSM 12127 / PCA).